The following is a 444-amino-acid chain: Divalent metal cation transporter MntH (444 aa).

Transmembrane regions (helical) follow at residues 31–51 (GGHW…VSVG), 68–88 (FGYL…VLQG), 115–135 (LALW…EVIG), 146–166 (IPLT…LLLM), 175–195 (AFVM…IALA), 212–232 (VVTN…TVMP), 267–287 (VALM…AAVF), 303–323 (ALLA…VALL), 356–376 (LLTR…YGEA), 381–401 (LLVL…IPLV), and 413–433 (LVAP…IVGL).

Belongs to the NRAMP family.

Its subcellular location is the cell inner membrane. Functionally, h(+)-stimulated, divalent metal cation uptake system. This chain is Divalent metal cation transporter MntH, found in Xanthomonas campestris pv. campestris (strain ATCC 33913 / DSM 3586 / NCPPB 528 / LMG 568 / P 25).